The sequence spans 234 residues: 2-C-methyl-D-erythritol 4-phosphate cytidylyltransferase (234 aa).

Belongs to the IspD/TarI cytidylyltransferase family. IspD subfamily.

The catalysed reaction is 2-C-methyl-D-erythritol 4-phosphate + CTP + H(+) = 4-CDP-2-C-methyl-D-erythritol + diphosphate. Its pathway is isoprenoid biosynthesis; isopentenyl diphosphate biosynthesis via DXP pathway; isopentenyl diphosphate from 1-deoxy-D-xylulose 5-phosphate: step 2/6. Its function is as follows. Catalyzes the formation of 4-diphosphocytidyl-2-C-methyl-D-erythritol from CTP and 2-C-methyl-D-erythritol 4-phosphate (MEP). This is 2-C-methyl-D-erythritol 4-phosphate cytidylyltransferase from Pseudomonas aeruginosa (strain UCBPP-PA14).